The sequence spans 91 residues: Cell division protein ZapA (91 aa).

Positions leucine 58 to aspartate 91 form a coiled coil.

The protein belongs to the ZapA family. Type 2 subfamily. As to quaternary structure, homodimer. Interacts with FtsZ.

Its subcellular location is the cytoplasm. In terms of biological role, activator of cell division through the inhibition of FtsZ GTPase activity, therefore promoting FtsZ assembly into bundles of protofilaments necessary for the formation of the division Z ring. It is recruited early at mid-cell but it is not essential for cell division. The protein is Cell division protein ZapA of Geobacillus kaustophilus (strain HTA426).